A 294-amino-acid polypeptide reads, in one-letter code: 4-hydroxy-tetrahydrodipicolinate synthase (294 aa).

T47 serves as a coordination point for pyruvate. The Proton donor/acceptor role is filled by Y135. The Schiff-base intermediate with substrate role is filled by K163. Residue V205 coordinates pyruvate.

It belongs to the DapA family. In terms of assembly, homotetramer; dimer of dimers.

Its subcellular location is the cytoplasm. The catalysed reaction is L-aspartate 4-semialdehyde + pyruvate = (2S,4S)-4-hydroxy-2,3,4,5-tetrahydrodipicolinate + H2O + H(+). Its pathway is amino-acid biosynthesis; L-lysine biosynthesis via DAP pathway; (S)-tetrahydrodipicolinate from L-aspartate: step 3/4. Catalyzes the condensation of (S)-aspartate-beta-semialdehyde [(S)-ASA] and pyruvate to 4-hydroxy-tetrahydrodipicolinate (HTPA). This is 4-hydroxy-tetrahydrodipicolinate synthase from Rickettsia bellii (strain OSU 85-389).